Here is a 797-residue protein sequence, read N- to C-terminus: Leucine-rich repeat-containing protein AAC1 (797 aa).

Positions 1-12 (MKRTSNRNEEAT) are enriched in basic and acidic residues. 4 disordered regions span residues 1-20 (MKRT…SSTT), 51-103 (YSLF…TTTT), 125-148 (NLPT…TTTT), and 307-333 (HSTS…TITA). Polar residues predominate over residues 55–81 (NEPNNDNDTNSSTRPNKQQKLLKSNES). The span at 82 to 103 (TTSTTTTTTPITTTTTTTTTTT) shows a compositional bias: low complexity. Residues 313–326 (SSPPPPPPPPPPQI) show a composition bias toward pro residues. LRR repeat units lie at residues 376–397 (KLKK…DFFS), 406–425 (TLET…QLLS), 435–456 (VLKR…YLNK), 464–484 (QLET…IMMK), 492–513 (SLKE…DFGK), 514–535 (SITS…KGLS), 543–564 (SITS…KSLS), 572–593 (TLKF…DHLV), 601–622 (SIHS…TLSQ), and 633–653 (PFKY…KKLI).

In Dictyostelium discoideum (Social amoeba), this protein is Leucine-rich repeat-containing protein AAC1 (AAC1).